We begin with the raw amino-acid sequence, 282 residues long: Undecaprenyl-diphosphatase (282 aa).

Helical transmembrane passes span glycine 40–tyrosine 60, methionine 87–threonine 107, leucine 116–leucine 136, isoleucine 153–serine 173, phenylalanine 196–threonine 216, asparagine 229–isoleucine 249, and serine 256–alanine 276.

The protein belongs to the UppP family.

It localises to the cell inner membrane. It catalyses the reaction di-trans,octa-cis-undecaprenyl diphosphate + H2O = di-trans,octa-cis-undecaprenyl phosphate + phosphate + H(+). Catalyzes the dephosphorylation of undecaprenyl diphosphate (UPP). Confers resistance to bacitracin. The polypeptide is Undecaprenyl-diphosphatase (Chlorobium phaeobacteroides (strain BS1)).